We begin with the raw amino-acid sequence, 203 residues long: Peptide deformylase (203 aa).

Fe cation-binding residues include C130 and H173. E174 is an active-site residue. Position 177 (H177) interacts with Fe cation.

The protein belongs to the polypeptide deformylase family. Fe(2+) is required as a cofactor.

It catalyses the reaction N-terminal N-formyl-L-methionyl-[peptide] + H2O = N-terminal L-methionyl-[peptide] + formate. In terms of biological role, removes the formyl group from the N-terminal Met of newly synthesized proteins. Requires at least a dipeptide for an efficient rate of reaction. N-terminal L-methionine is a prerequisite for activity but the enzyme has broad specificity at other positions. The sequence is that of Peptide deformylase from Streptococcus pneumoniae serotype 2 (strain D39 / NCTC 7466).